The primary structure comprises 123 residues: Type II secretion system protein I (123 aa).

The propeptide at 1–4 is leader sequence; the sequence is MKRG. At phenylalanine 5 the chain carries N-methylphenylalanine. Residues 5–25 traverse the membrane as a helical segment; the sequence is FTLLEVMLALAIFALSATAVL.

Belongs to the GSP I family. In terms of assembly, type II secretion is composed of four main components: the outer membrane complex, the inner membrane complex, the cytoplasmic secretion ATPase and the periplasm-spanning pseudopilus. Interacts with core component GspG. Interacts with pseudopilins GspJ and GspK. Post-translationally, cleaved by prepilin peptidase. Methylated by prepilin peptidase at the amino group of the N-terminal phenylalanine once the leader sequence is cleaved by prepilin peptidase.

It is found in the cell inner membrane. Its function is as follows. Component of the type II secretion system required for the energy-dependent secretion of extracellular factors such as proteases and toxins from the periplasm. Part of the pseudopilus tip complex that is critical for the recognition and binding of secretion substrates. The chain is Type II secretion system protein I (gspI) from Escherichia coli.